The sequence spans 423 residues: UBX domain-containing protein 1 (423 aa).

The disordered stretch occupies residues 44–167 (QTDDQKDRRE…EVTDPSDPNS (124 aa)). Basic and acidic residues predominate over residues 46-66 (DDQKDRREEAHWNRQQEKALK). Polar residues predominate over residues 69–79 (AFSTNSSNKAI). Residues 115–130 (SSRSGSGNNSRFMSFS) show a composition bias toward low complexity. Residues serine 128, serine 210, and serine 224 each carry the phosphoserine modification. One can recognise an SEP domain in the interval 232–297 (KVTREITFWK…VYKKLDESYK (66 aa)). A Glycyl lysine isopeptide (Lys-Gly) (interchain with G-Cter in ubiquitin) cross-link involves residue lysine 241. The disordered stretch occupies residues 299–348 (PTRKLGGFSGQGQRLGSPIPGESSPAEVPKNETPAAQEQPMPDNEPKQGD). Phosphoserine is present on residues serine 315, serine 321, and serine 322. Position 331 is a phosphothreonine (threonine 331). The 78-residue stretch at 344–421 (PKQGDTSIQI…DLLNSVVVQR (78 aa)) folds into the UBX domain.

In terms of assembly, forms a complex composed of CDC48, NPL4, UFD1, DOA1, SHP1 and deubiquitinase OTU1. Interacts with CDC48.

The protein resides in the nucleus. Its subcellular location is the cytoplasm. Its function is as follows. Involved in CDC48-dependent protein degradation through the ubiquitin/proteasome pathway. Direct or indirect positive regulator of GLC7 activity. The polypeptide is UBX domain-containing protein 1 (SHP1) (Saccharomyces cerevisiae (strain ATCC 204508 / S288c) (Baker's yeast)).